Consider the following 97-residue polypeptide: MDLEEIRKKKLEELKKEEAKRKLLEQLESNVMQYLTSEAKQRLYNIKMAHPEKYELALQILYRVIQQTPTIIDDTTLKKLLAKLFQKREPKIRFIRK.

The protein belongs to the PDCD5 family.

In Nanoarchaeum equitans (strain Kin4-M), this protein is DNA-binding protein NEQ150.